The following is a 302-amino-acid chain: MDQNNSLPPYAQGLASPQSAMTPGIPIFSPMMPYGTGLTPQPAQSTNSLSILEEQQRQQQQQQAAAQQSTSQPTQAPSGQTPQLFHSQTLTTAPLPGTTPLYPSPMTPMTPITPATPASESSGIVPQLQNIVSTVNLGCKLDLKTIALRARNAEYNPKRFAAVIMRIREPRTTALIFSSGKMVCTGAKSEEQSRLAARKYARVVQKLGFPAKFLDFKIQNMVGSCDVKFPIRLEGLVLTHQQFSSYEPELFPGLIYRMIKPRIVLLIFVSGKVVLTGAKVRGEIYEAFENIYPILKGFRKTT.

2 disordered regions span residues 1-22 (MDQNNSLPPYAQGLASPQSAMT) and 53-122 (EEQQ…SESS). Low complexity-rich tracts occupy residues 57-101 (RQQQ…TTPL) and 109-119 (MTPITPATPAS). 2 repeat units span residues 128–204 (LQNI…ARVV) and 218–295 (IQNM…YPIL).

The protein belongs to the TBP family. Belongs to the TFIID complex together with the TBP-associated factors (TAFs). Binds DNA as monomer.

Its subcellular location is the nucleus. In terms of biological role, general transcription factor that functions at the core of the DNA-binding multiprotein factor TFIID. Binding of TFIID to the TATA box is the initial transcriptional step of the pre-initiation complex (PIC), playing a role in the activation of eukaryotic genes transcribed by RNA polymerase II. This is TATA-box-binding protein (TBP) from Craspedocephalus gramineus (Bamboo pit viper).